The sequence spans 238 residues: Probable transcriptional regulatory protein CTA_0499 (238 aa).

Positions 1 to 21 are disordered; the sequence is MAGHSKWANTKHRKERADHKK. The span at 9–21 shows a compositional bias: basic residues; it reads NTKHRKERADHKK.

It belongs to the TACO1 family.

The protein resides in the cytoplasm. This chain is Probable transcriptional regulatory protein CTA_0499, found in Chlamydia trachomatis serovar A (strain ATCC VR-571B / DSM 19440 / HAR-13).